A 568-amino-acid chain; its full sequence is Proline--tRNA ligase (568 aa).

Belongs to the class-II aminoacyl-tRNA synthetase family. ProS type 1 subfamily. As to quaternary structure, homodimer.

The protein resides in the cytoplasm. It catalyses the reaction tRNA(Pro) + L-proline + ATP = L-prolyl-tRNA(Pro) + AMP + diphosphate. In terms of biological role, catalyzes the attachment of proline to tRNA(Pro) in a two-step reaction: proline is first activated by ATP to form Pro-AMP and then transferred to the acceptor end of tRNA(Pro). As ProRS can inadvertently accommodate and process non-cognate amino acids such as alanine and cysteine, to avoid such errors it has two additional distinct editing activities against alanine. One activity is designated as 'pretransfer' editing and involves the tRNA(Pro)-independent hydrolysis of activated Ala-AMP. The other activity is designated 'posttransfer' editing and involves deacylation of mischarged Ala-tRNA(Pro). The misacylated Cys-tRNA(Pro) is not edited by ProRS. The protein is Proline--tRNA ligase of Campylobacter jejuni subsp. jejuni serotype O:6 (strain 81116 / NCTC 11828).